The primary structure comprises 806 residues: Polyribonucleotide nucleotidyltransferase (806 aa).

Residues aspartate 488 and aspartate 494 each contribute to the Mg(2+) site. A KH domain is found at 555-614 (PQIRTVQIPTDKIRDLIGPGGKTIRGIIEATQVKIDVDDTGRVNIASSDEEGLKKALAMI). The 68-residue stretch at 624–691 (GKTYLGKVVR…EGNRIKLSRK (68 aa)) folds into the S1 motif domain. Residues 698-806 (RQKLGLPEPG…QGGGGNRGPQ (109 aa)) are disordered. Residues 704-717 (PEPGAEAPAAAEGQ) are compositionally biased toward low complexity. Over residues 738 to 757 (GGEDFDDFDEEGGEGEGEDE) the composition is skewed to acidic residues. Basic and acidic residues predominate over residues 758-774 (NFNREDTPNSAPGERRP). A compositionally biased stretch (basic residues) spans 783–792 (RGRRRRRGRG). The span at 793 to 806 (RGPGQGGGGNRGPQ) shows a compositional bias: gly residues.

The protein belongs to the polyribonucleotide nucleotidyltransferase family. The cofactor is Mg(2+).

It is found in the cytoplasm. The catalysed reaction is RNA(n+1) + phosphate = RNA(n) + a ribonucleoside 5'-diphosphate. In terms of biological role, involved in mRNA degradation. Catalyzes the phosphorolysis of single-stranded polyribonucleotides processively in the 3'- to 5'-direction. The polypeptide is Polyribonucleotide nucleotidyltransferase (Acidobacterium capsulatum (strain ATCC 51196 / DSM 11244 / BCRC 80197 / JCM 7670 / NBRC 15755 / NCIMB 13165 / 161)).